The following is a 254-amino-acid chain: Membrane protein US20 (254 aa).

The next 7 membrane-spanning stretches (helical) occupy residues 31 to 51 (AIFIFQLAFSFGLGSVFWLGF), 62 to 82 (YSFFLTVLVPIVCMFITYTLG), 89 to 109 (ATVLFIYLLANSLTAAIFQMC), 114 to 134 (VLVGSYVMTLALFISFTGLAF), 143 to 163 (WKCISCVYVVMLLSFLTLALL), 178 to 198 (AFSISFFLGILAYDSLMVIFF), and 208 to 228 (AVCLYLDSMAIFLTLLLMLSG).

It is found in the host membrane. The chain is Membrane protein US20 (US20) from Homo sapiens (Human).